A 102-amino-acid polypeptide reads, in one-letter code: Large ribosomal subunit protein bL21 (102 aa).

It belongs to the bacterial ribosomal protein bL21 family. As to quaternary structure, part of the 50S ribosomal subunit. Contacts protein L20.

In terms of biological role, this protein binds to 23S rRNA in the presence of protein L20. The protein is Large ribosomal subunit protein bL21 of Geobacillus sp. (strain WCH70).